We begin with the raw amino-acid sequence, 430 residues long: Lipoyl synthase, mitochondrial (430 aa).

The N-terminal 37 residues, 1–37, are a transit peptide targeting the mitochondrion; it reads MAASTGKLRTLFSAHSSLSARPSSALPALRLTILRSY. Over residues 40 to 56 the composition is skewed to low complexity; sequence TTPPDSSISNPSNPSTT. The segment at 40–64 is disordered; sequence TTPPDSSISNPSNPSTTVKRPPTAF. C141, C146, C152, C172, C176, C179, and S387 together coordinate [4Fe-4S] cluster. The Radical SAM core domain occupies 155-376; that stretch reads GSSKSAATAT…KERALEMGFL (222 aa).

It belongs to the radical SAM superfamily. Lipoyl synthase family. Requires [4Fe-4S] cluster as cofactor.

It is found in the mitochondrion. The catalysed reaction is [[Fe-S] cluster scaffold protein carrying a second [4Fe-4S](2+) cluster] + N(6)-octanoyl-L-lysyl-[protein] + 2 oxidized [2Fe-2S]-[ferredoxin] + 2 S-adenosyl-L-methionine + 4 H(+) = [[Fe-S] cluster scaffold protein] + N(6)-[(R)-dihydrolipoyl]-L-lysyl-[protein] + 4 Fe(3+) + 2 hydrogen sulfide + 2 5'-deoxyadenosine + 2 L-methionine + 2 reduced [2Fe-2S]-[ferredoxin]. The protein operates within protein modification; protein lipoylation via endogenous pathway; protein N(6)-(lipoyl)lysine from octanoyl-[acyl-carrier-protein]: step 2/2. Functionally, catalyzes the radical-mediated insertion of two sulfur atoms into the C-6 and C-8 positions of the octanoyl moiety bound to the lipoyl domains of lipoate-dependent enzymes, thereby converting the octanoylated domains into lipoylated derivatives. In Blastomyces gilchristii (strain SLH14081) (Blastomyces dermatitidis), this protein is Lipoyl synthase, mitochondrial.